We begin with the raw amino-acid sequence, 758 residues long: Relaxin receptor 1 (758 aa).

Residues 1–409 (MTSGPFFFCI…ENLLASIIQR (409 aa)) are Extracellular-facing. The LDL-receptor class A domain occupies 26–63 (SCPLGSFPCGNMSRCLPQLLHCNGVDDCGNRADEDHCG). Disulfide bonds link C27–C40, C34–C53, and C47–C62. A glycan (N-linked (GlcNAc...) asparagine) is linked at N36. Ca(2+) is bound by residues L45, N48, V50, D52, D58, and E59. The N-linked (GlcNAc...) asparagine glycan is linked to N127. LRR repeat units lie at residues 127–148 (NVTVMSLQRNFIRTLPPNGFRK), 151–172 (ELQKLCLQNNRIHSVSVSAFRG), 175–196 (SLTKLYLSHNRITFLKPGVFED), 199–220 (RLEWLIIEDNHLSRISPLTFYG), 223–244 (SLILLVLMNNALTRLPDKPLCQ), 248–269 (RLHWLDFEGNRIHNLRNLTFIS), 272–293 (NLTVLVMRKNKINYLNEHAFTH), 296–317 (KLDELDLGSNKIENLPPNIFKD), 320–341 (ELSQLNISYNPIQKIEVNQFDC), and 344–365 (KLKSLSLEGIEISNIQQRMFRP). Residues N264 and N272 are each glycosylated (N-linked (GlcNAc...) asparagine). N325 carries N-linked (GlcNAc...) asparagine glycosylation. N368 is a glycosylation site (N-linked (GlcNAc...) asparagine). The chain crosses the membrane as a helical span at residues 410–430 (VFVWVVSAITCFGNIFVICMR). Residues 431–443 (PYIRSENKLHAMS) lie on the Cytoplasmic side of the membrane. Residues 444 to 464 (IISLCCADCLMGVYLFVIGAF) form a helical membrane-spanning segment. The Extracellular segment spans residues 465–486 (DLKFRGEYNKHAQPWMESVHCQ). A disulfide bridge connects residues C485 and C563. Residues 487 to 507 (FMGSLAILSTEVSVLLLTFLT) traverse the membrane as a helical segment. At 508 to 527 (LEKYICIVYPFRCLRPRKCR) the chain is on the cytoplasmic side. A helical membrane pass occupies residues 528-548 (TITVLIFIWIIGFIVAFAPLG). Topologically, residues 549 to 577 (NKEFFKNYYGTNGVCFPLHSEDTGSTGAQ) are extracellular. Residues 578–598 (IYSVVIFLGINLVAFIIIVFS) form a helical membrane-spanning segment. At 599–629 (YGSMFYSVHQSSVTVTEIQKQVKKEVVLAKR) the chain is on the cytoplasmic side. A helical membrane pass occupies residues 630-650 (FFFIVFTDALCWIPIFILKFL). S651 is a topological domain (extracellular). A helical transmembrane segment spans residues 652–672 (LLQVEIPDSITSWVVIFILPI). Residues 673–758 (NSALNPIIYT…SQSSRLNSYS (86 aa)) are Cytoplasmic-facing.

This sequence belongs to the G-protein coupled receptor 1 family. In terms of assembly, interacts with C1QTNF8.

It is found in the cell membrane. Receptor for relaxins. The activity of this receptor is mediated by G proteins leading to stimulation of adenylate cyclase and an increase of cAMP. Binding of the ligand may also activate a tyrosine kinase pathway that inhibits the activity of a phosphodiesterase that degrades cAMP. The sequence is that of Relaxin receptor 1 (Rxfp1) from Mus musculus (Mouse).